We begin with the raw amino-acid sequence, 54 residues long: Protein GndA (54 aa).

Residues 28–50 (LFVVIVSFQQRALTSSVPVFLAV) form a helical membrane-spanning segment.

It localises to the cell inner membrane. In Escherichia coli (strain K12), this protein is Protein GndA.